The primary structure comprises 185 residues: Ribosome maturation factor RimM (185 aa).

Residues 105-184 (KDEYYWKDII…IVVVDWEIYK (80 aa)) enclose the PRC barrel domain.

This sequence belongs to the RimM family. Binds ribosomal protein uS19.

It is found in the cytoplasm. Functionally, an accessory protein needed during the final step in the assembly of 30S ribosomal subunit, possibly for assembly of the head region. Essential for efficient processing of 16S rRNA. May be needed both before and after RbfA during the maturation of 16S rRNA. It has affinity for free ribosomal 30S subunits but not for 70S ribosomes. This chain is Ribosome maturation factor RimM, found in Blochmanniella floridana.